The following is an 81-amino-acid chain: Sulfur carrier protein TusA (81 aa).

Catalysis depends on Cys19, which acts as the Cysteine persulfide intermediate.

This sequence belongs to the sulfur carrier protein TusA family. As to quaternary structure, interacts with IscS.

The protein localises to the cytoplasm. Its pathway is tRNA modification. In terms of biological role, sulfur carrier protein involved in sulfur trafficking in the cell. Part of a sulfur-relay system required for 2-thiolation during synthesis of 2-thiouridine of the modified wobble base 5-methylaminomethyl-2-thiouridine (mnm(5)s(2)U) in tRNA. Interacts with IscS and stimulates its cysteine desulfurase activity. Accepts an activated sulfur from IscS, which is then transferred to TusD, and thus determines the direction of sulfur flow from IscS to 2-thiouridine formation. Also appears to be involved in sulfur transfer for the biosynthesis of molybdopterin. In Serratia proteamaculans (strain 568), this protein is Sulfur carrier protein TusA.